A 250-amino-acid polypeptide reads, in one-letter code: Coproheme decarboxylase (250 aa).

Residues R131, 145 to 149, H172, and Q185 each bind Fe-coproporphyrin III; that span reads YPMNK. Y145 is an active-site residue.

The protein belongs to the ChdC family. Type 1 subfamily. Fe-coproporphyrin III serves as cofactor.

The catalysed reaction is Fe-coproporphyrin III + 2 H2O2 + 2 H(+) = heme b + 2 CO2 + 4 H2O. The enzyme catalyses Fe-coproporphyrin III + H2O2 + H(+) = harderoheme III + CO2 + 2 H2O. It catalyses the reaction harderoheme III + H2O2 + H(+) = heme b + CO2 + 2 H2O. Its pathway is porphyrin-containing compound metabolism; protoheme biosynthesis. Its function is as follows. Involved in coproporphyrin-dependent heme b biosynthesis. Catalyzes the decarboxylation of Fe-coproporphyrin III (coproheme) to heme b (protoheme IX), the last step of the pathway. The reaction occurs in a stepwise manner with a three-propionate intermediate. The sequence is that of Coproheme decarboxylase from Staphylococcus aureus (strain USA300 / TCH1516).